Consider the following 265-residue polypeptide: MVTTLSYTQRAEAHPSPLAKRLFTVMEQKKSNLCASIDVKTTDEFLSLVDTLGPYICLVKTHIDIIDDFSFEGTIVPLKKLAEKHNFLIFEDRKFADIGKTVKNQYASGVFKIAQWSDITNAHGVTGAGIVKGLKEAAQETTDEPRGLLMLAELSSKGSLATGEYTKQTVDIAKTDKDFVIGFIAQRDMGGHDEGFDWLIMTPGVGLDDKGDGLGQQYRGVDEVVAGGSDIIIVGRGLFGKGRDPAVEGERYRSAGWNAYLKRCQ.

Substrate is bound by residues D38, 60-62, 92-101, Y218, and R236; these read KTH and DRKFADIGKT. K94 functions as the Proton donor in the catalytic mechanism.

This sequence belongs to the OMP decarboxylase family.

The catalysed reaction is orotidine 5'-phosphate + H(+) = UMP + CO2. It functions in the pathway pyrimidine metabolism; UMP biosynthesis via de novo pathway; UMP from orotate: step 2/2. The protein is Orotidine 5'-phosphate decarboxylase (URA3) of Cyberlindnera fabianii (Yeast).